A 149-amino-acid polypeptide reads, in one-letter code: Transcriptional repressor NrdR (149 aa).

The segment at 3–34 is a zinc-finger region; it reads CPFCSATDTKVIDSRLVAEGHQVRRRRECTEC. Residues 49 to 139 enclose the ATP-cone domain; that stretch reads PRVIKRDGSR…VYRAFEDVSE (91 aa).

The protein belongs to the NrdR family. Zn(2+) is required as a cofactor.

Functionally, negatively regulates transcription of bacterial ribonucleotide reductase nrd genes and operons by binding to NrdR-boxes. The chain is Transcriptional repressor NrdR from Shewanella putrefaciens (strain CN-32 / ATCC BAA-453).